Reading from the N-terminus, the 435-residue chain is Glutamyl-tRNA reductase (435 aa).

Residues T49–R52, S114, E119–Q121, and Q125 contribute to the substrate site. The active-site Nucleophile is C50. NADP(+) is bound at residue G204–I209.

It belongs to the glutamyl-tRNA reductase family. In terms of assembly, homodimer.

It carries out the reaction (S)-4-amino-5-oxopentanoate + tRNA(Glu) + NADP(+) = L-glutamyl-tRNA(Glu) + NADPH + H(+). Its pathway is porphyrin-containing compound metabolism; protoporphyrin-IX biosynthesis; 5-aminolevulinate from L-glutamyl-tRNA(Glu): step 1/2. Catalyzes the NADPH-dependent reduction of glutamyl-tRNA(Glu) to glutamate 1-semialdehyde (GSA). In Actinobacillus succinogenes (strain ATCC 55618 / DSM 22257 / CCUG 43843 / 130Z), this protein is Glutamyl-tRNA reductase.